Here is a 226-residue protein sequence, read N- to C-terminus: MMLHIPEVLTPAQVSEIRQRLDAADWVDGKATVGAQGAQVKKNRQLPELSPVGMELGQIILKALVNNPLFFAAALPMRYMPPLFNRYEGGEHYGFHIDGSVRNIPGSNLSLRTDLSCTLFLCEPEDYDGGELIVADTYGEHEVKLPAGDMILYPSSSLHKVEPVTRGARVCSFFWLQSMVADDAKRSLLFELDQNIQKLRAKLGDCEEVVGLTGHYHNLLRQWAAV.

The Fe2OG dioxygenase domain maps to 78–178; that stretch reads RYMPPLFNRY…RVCSFFWLQS (101 aa). The Fe cation site is built by histidine 96, aspartate 98, and histidine 159. Arginine 169 lines the 2-oxoglutarate pocket.

It depends on Fe(2+) as a cofactor. The cofactor is L-ascorbate.

In Janthinobacterium sp. (strain Marseille) (Minibacterium massiliensis), this protein is PKHD-type hydroxylase mma_3620.